The primary structure comprises 65 residues: Small ribosomal subunit protein bS21 (65 aa).

The protein belongs to the bacterial ribosomal protein bS21 family.

The chain is Small ribosomal subunit protein bS21 from Chlorobium limicola (strain DSM 245 / NBRC 103803 / 6330).